The primary structure comprises 444 residues: Phosphoglucosamine mutase (444 aa).

Ser102 (phosphoserine intermediate) is an active-site residue. Mg(2+) contacts are provided by Ser102, Asp241, Asp243, and Asp245. A Phosphoserine modification is found at Ser102.

This sequence belongs to the phosphohexose mutase family. Requires Mg(2+) as cofactor. In terms of processing, activated by phosphorylation.

The catalysed reaction is alpha-D-glucosamine 1-phosphate = D-glucosamine 6-phosphate. Its function is as follows. Catalyzes the conversion of glucosamine-6-phosphate to glucosamine-1-phosphate. In Mannheimia succiniciproducens (strain KCTC 0769BP / MBEL55E), this protein is Phosphoglucosamine mutase.